Here is a 551-residue protein sequence, read N- to C-terminus: Solute carrier family 22 member 6 (551 aa).

At 1–9 (MAFNDLLKQ) the chain is on the cytoplasmic side. Residues 10–30 (VGGVGRFQLIQVTMVVAPLLL) traverse the membrane as a helical segment. Residues 31 to 135 (MASHNTLQNF…LVCSHRAFRQ (105 aa)) are Extracellular-facing. N-linked (GlcNAc...) asparagine glycans are attached at residues Asn-39, Asn-56, Asn-92, and Asn-113. A helical membrane pass occupies residues 136 to 156 (LAQSLYMVGVLLGAMVFGYLA). Over 157 to 164 (DRLGRRKV) the chain is Cytoplasmic. Residues 165–187 (LILNYLQTAVSGTCAAYAPNYTV) form a helical membrane-spanning segment. Residues 188–195 (YCVFRLLS) are Extracellular-facing. Residues 196 to 216 (GMSLASIAINCMTLNVEWMPI) form a helical membrane-spanning segment. Residues 217–224 (HTRAYVGT) lie on the Cytoplasmic side of the membrane. A helical membrane pass occupies residues 225–245 (LIGYVYSLGQFLLAGIAYAVP). Residues 246 to 248 (HWR) lie on the Extracellular side of the membrane. A helical transmembrane segment spans residues 249–269 (HLQLVVSVPFFIAFIYSWFFI). Topologically, residues 270–337 (ESARWYSSSG…ELLRCPTLRH (68 aa)) are cytoplasmic. Residues 338–358 (LFLCLSMLWFATSFAYYGLVM) traverse the membrane as a helical segment. Topologically, residues 359 to 368 (DLQGFGVSMY) are extracellular. The chain crosses the membrane as a helical span at residues 369 to 389 (LIQVIFGAVDLPAKFVCFLVI). Topologically, residues 390–395 (NSMGRR) are cytoplasmic. The helical transmembrane segment at 396–416 (PAQMASLLLAGICILVNGIIP) threads the bilayer. The Extracellular segment spans residues 417-425 (KSHTIIRTS). A helical transmembrane segment spans residues 426-446 (LAVLGKGCLASSFNCIFLYTG). At 447–484 (ELYPTVIRQTGLGMGSTMARVGSIVSPLVSMTAEFYPS) the chain is on the cytoplasmic side. A helical transmembrane segment spans residues 485–505 (MPLFIFGAVPVVASAVTALLP). Residues 506 to 551 (ETLGQPLPDTVQDLKSRSRGKQNQQQQEQQKQMMPLQASTQEKNGL) lie on the Extracellular side of the membrane. The segment at 514–551 (DTVQDLKSRSRGKQNQQQQEQQKQMMPLQASTQEKNGL) is disordered. Residues 526 to 537 (KQNQQQQEQQKQ) show a composition bias toward low complexity. The segment covering 542-551 (QASTQEKNGL) has biased composition (polar residues).

This sequence belongs to the major facilitator (TC 2.A.1) superfamily. Organic cation transporter (TC 2.A.1.19) family. Glycosylated. Glycosylation is necessary for proper targeting of the transporter to the plasma membrane. In terms of tissue distribution, highly expressed in kidney; in the particular segment of the proximal tubule. In kidney, found preferentially in the cortex and outer medulla and weakly in the inner medulla. Expressed to a lower extent in brain.

It localises to the cell membrane. The protein resides in the basolateral cell membrane. It is found in the basal cell membrane. The catalysed reaction is (6R)-L-erythro-5,6,7,8-tetrahydrobiopterin(out) + a dicarboxylate(in) = (6R)-L-erythro-5,6,7,8-tetrahydrobiopterin(in) + a dicarboxylate(out). It catalyses the reaction L-erythro-7,8-dihydrobiopterin(out) + a dicarboxylate(in) = L-erythro-7,8-dihydrobiopterin(in) + a dicarboxylate(out). It carries out the reaction L-sepiapterin(out) + a dicarboxylate(in) = L-sepiapterin(in) + a dicarboxylate(out). The enzyme catalyses prostaglandin F2alpha(out) + a dicarboxylate(in) = prostaglandin F2alpha(in) + a dicarboxylate(out). The catalysed reaction is prostaglandin E2(out) + a dicarboxylate(in) = prostaglandin E2(in) + a dicarboxylate(out). It catalyses the reaction 3',5'-cyclic AMP(out) + a dicarboxylate(in) = 3',5'-cyclic AMP(in) + a dicarboxylate(out). It carries out the reaction 3',5'-cyclic GMP(out) + a dicarboxylate(in) = 3',5'-cyclic GMP(in) + a dicarboxylate(out). The enzyme catalyses urate(out) + a dicarboxylate(in) = urate(in) + a dicarboxylate(out). The catalysed reaction is kynurenate(out) + glutarate(in) = kynurenate(in) + glutarate(out). It catalyses the reaction (indol-3-yl)acetate(out) + a dicarboxylate(in) = (indol-3-yl)acetate(in) + a dicarboxylate(out). It carries out the reaction indoxyl sulfate(out) + a dicarboxylate(in) = indoxyl sulfate(in) + a dicarboxylate(out). The enzyme catalyses N-benzoylglycine(out) + a dicarboxylate(in) = N-benzoylglycine(in) + a dicarboxylate(out). The catalysed reaction is 3-carboxy-4-methyl-5-propyl-2-furanpropanoate(out) + a dicarboxylate(in) = 3-carboxy-4-methyl-5-propyl-2-furanpropanoate(in) + a dicarboxylate(out). Its function is as follows. Secondary active transporter that functions as a Na(+)-independent organic anion (OA)/dicarboxylate antiporter where the uptake of one molecule of OA into the cell is coupled with an efflux of one molecule of intracellular dicarboxylate such as alpha-ketoglutarate or glutarate. Mediates the uptake of OA across the basolateral side of proximal tubule epithelial cells, thereby contributing to the renal elimination of endogenous OA from the systemic circulation into the urine. Function as a biopterin transporters involved in the uptake and the secretion of coenzymes tetrahydrobiopterin (BH4) dihydrobiopterin (BH2) and sepiapterin to urine, thereby determining baseline levels of blood biopterins. Transports prostaglandin E2 (PGE2) and prostaglandin F2-alpha (PGF2-alpha) and may contribute to their renal excretion. Also mediates the uptake of cyclic nucleotides such as cAMP and cGMP. Involved in the transport of neuroactive tryptophan metabolites kynurenate (KYNA) and xanthurenate (XA) and may contribute to their secretion from the brain. May transport glutamate. Also involved in the disposition of uremic toxins and potentially toxic xenobiotics by the renal organic anion secretory pathway, helping reduce their undesired toxicological effects on the body. Uremic toxins include the indoxyl sulfate (IS), hippurate, indole acetate (IA), 3-carboxy-4- methyl-5-propyl-2-furanpropionate(CMPF) and urate. Xenobiotics include the mycotoxin ochratoxin (OTA). May also contribute to the transport of organic compounds in testes across the blood-testis-barrier. May also work as a bidirectional OA/dicarboxylate exchanger. The sequence is that of Solute carrier family 22 member 6 from Rattus norvegicus (Rat).